The primary structure comprises 239 residues: Small ribosomal subunit protein uS5 (239 aa).

Positions 1–62 (MADETEIQAA…DDRRGSEEQG (62 aa)) are disordered. A compositionally biased stretch (low complexity) spans 9–19 (AAAPAEAAPGA). A compositionally biased stretch (basic and acidic residues) spans 34-62 (GGNDRGGDRGRGRDGRGRRDDRRGSEEQG). The 64-residue stretch at 65–128 (LIEKLVHINR…AAAKKAMVRV (64 aa)) folds into the S5 DRBM domain.

The protein belongs to the universal ribosomal protein uS5 family. In terms of assembly, part of the 30S ribosomal subunit. Contacts proteins S4 and S8.

With S4 and S12 plays an important role in translational accuracy. In terms of biological role, located at the back of the 30S subunit body where it stabilizes the conformation of the head with respect to the body. The polypeptide is Small ribosomal subunit protein uS5 (Rhizorhabdus wittichii (strain DSM 6014 / CCUG 31198 / JCM 15750 / NBRC 105917 / EY 4224 / RW1) (Sphingomonas wittichii)).